We begin with the raw amino-acid sequence, 284 residues long: Para-Rep C3 (284 aa).

Residues 3 to 98 (TVQSTCWVFT…IEGPWEYGKY (96 aa)) form the CRESS-DNA virus Rep endonuclease domain. An RCR-1 motif is present at residues 10–13 (VFTL). E36 and H42 together coordinate a divalent metal cation. An RCR-2 motif is present at residues 42 to 44 (HLQ). Positions 51–71 (AQQSLGQMKAIIPGAHFEKMR) match the Nuclear localization signal motif. Y81 serves as the catalytic For DNA cleavage activity. Positions 81-84 (YAMK) match the RCR-3 motif. Position 86 (D86) interacts with a divalent metal cation. The short motif at 98–104 (YIKKGSH) is the Nuclear localization signal element. 174–182 (GPKGGEGKS) provides a ligand contact to ATP.

The protein belongs to the nanoviridea/circoviridae replication-associated protein family. In terms of assembly, homooligomer (Potential). Rep binds to repeated DNA motifs (iterons). Mg(2+) is required as a cofactor. Requires Mn(2+) as cofactor.

Its subcellular location is the host nucleus. The catalysed reaction is ATP + H2O = ADP + phosphate + H(+). Functionally, initiates and terminates the replication only of its own subviral DNA molecule. The closed circular ssDNA genome is first converted to a superhelical dsDNA. Rep binds a specific hairpin at the genome origin of replication. Introduces an endonucleolytic nick within the intergenic region of the genome, thereby initiating the rolling circle replication (RCR). Following cleavage, binds covalently to the 5'-phosphate of DNA as a tyrosyl ester. The cleavage gives rise to a free 3'-OH that serves as a primer for the cellular DNA polymerase. The polymerase synthesizes the (+) strand DNA by rolling circle mechanism. After one round of replication, a Rep-catalyzed nucleotidyl transfer reaction releases a circular single-stranded virus genome, thereby terminating the replication. Displays origin-specific DNA cleavage, nucleotidyl transferase, ATPase and helicase activities. This chain is Para-Rep C3 (C3), found in Milk vetch dwarf C3 alphasatellite (MVDC3A).